The chain runs to 104 residues: MIMTNTEAVAGHKIIKNLGLVKGNTIRAKHIGKDIMASLRSIVGGEIEEYTQMLDEARNEALKRMEADAKEKGANAIICVRFSTSAVMQNASEVMAYGTAVIVE.

Belongs to the UPF0145 family.

The chain is UPF0145 protein cbdbA1711 from Dehalococcoides mccartyi (strain CBDB1).